Consider the following 79-residue polypeptide: U-actitoxin-Oulsp1 (79 aa).

A signal peptide spans 1–21 (MNTKLVVVFLLSAILFVSVTA). The propeptide occupies 22–43 (SRPGKDLERDEAYETYDDENKR). The ShKT domain occupies 45 to 79 (CKDVFPAATCRHAKSVGNCSSEKYKRNCAITCGAC). 3 cysteine pairs are disulfide-bonded: cysteine 45/cysteine 79, cysteine 54/cysteine 72, and cysteine 63/cysteine 76. A crucial for binding to potassium channels region spans residues 67–68 (KY).

This sequence belongs to the sea anemone type 1 potassium channel toxin family. Type 1b subfamily. Post-translationally, two similar peptides (OspTx2a-p1 and -p2) are obtained after synthesis and oxidative folding. They may differ by a D-Cys at position 76 (corresponding to OspTx2a-p2). Since C-terminal Cys residues are prone to racemization during solid-phase peptide synthesis, and if the presence of a D-amino acid is correct, it is probable that OspTx2a-p1 (L-Cys-76 form) corresponds to the native peptide.

It is found in the secreted. Its function is as follows. Toxin that weakly blocks the two voltage-gated potassium channels on Kv1.2/KCNA2 (IC(50)=1.8-2.5 uM) and Kv1.6/KCNA6 (IC(50)=5.6-6.2 uM). This Oulactis sp. (Sea anemone) protein is U-actitoxin-Oulsp1.